Reading from the N-terminus, the 287-residue chain is Thioredoxin-related transmembrane protein 2 (287 aa).

Positions methionine 1 to alanine 13 are cleaved as a signal peptide. Residues alanine 14–methionine 112 lie on the Extracellular side of the membrane. A helical transmembrane segment spans residues glycine 113–leucine 133. Over glycine 134–glutamine 287 the chain is Cytoplasmic. The 73-residue stretch at histidine 137–serine 209 folds into the Thioredoxin domain. Residues lysine 284–glutamine 287 carry the Di-lysine motif motif.

Monomer. Homodimer; disulfide-linked. Occurs in both reduced and oxidized monomeric form. Oxidative conditions increase homodimerization.

The protein localises to the endoplasmic reticulum membrane. The protein resides in the mitochondrion membrane. Its function is as follows. Endoplasmic reticulum and mitochondria-associated protein that probably functions as a regulator of cellular redox state and thereby regulates protein post-translational modification, protein folding and mitochondrial activity. The sequence is that of Thioredoxin-related transmembrane protein 2 (tmx2) from Xenopus laevis (African clawed frog).